The primary structure comprises 310 residues: S-methyl-5'-thioadenosine phosphorylase (310 aa).

Phosphate-binding positions include T20, 62 to 63 (RH), and 95 to 96 (SA). M197 is a binding site for substrate. S198 serves as a coordination point for phosphate. 221–223 (DYD) provides a ligand contact to substrate.

This sequence belongs to the PNP/MTAP phosphorylase family. MTAP subfamily. Homotrimer.

It is found in the cytoplasm. The protein localises to the nucleus. It catalyses the reaction S-methyl-5'-thioadenosine + phosphate = 5-(methylsulfanyl)-alpha-D-ribose 1-phosphate + adenine. It participates in amino-acid biosynthesis; L-methionine biosynthesis via salvage pathway; S-methyl-5-thio-alpha-D-ribose 1-phosphate from S-methyl-5'-thioadenosine (phosphorylase route): step 1/1. Its function is as follows. Catalyzes the reversible phosphorylation of S-methyl-5'-thioadenosine (MTA) to adenine and 5-methylthioribose-1-phosphate. Involved in the breakdown of MTA, a major by-product of polyamine biosynthesis. Responsible for the first step in the methionine salvage pathway after MTA has been generated from S-adenosylmethionine. Has broad substrate specificity with 6-aminopurine nucleosides as preferred substrates. In Neurospora crassa (strain ATCC 24698 / 74-OR23-1A / CBS 708.71 / DSM 1257 / FGSC 987), this protein is S-methyl-5'-thioadenosine phosphorylase.